A 279-amino-acid polypeptide reads, in one-letter code: Nitrate import permease protein NrtB (279 aa).

The ABC transmembrane type-1 domain occupies 86–270; that stretch reads IAASLQRVAV…LLNALVGFIA (185 aa). Helical transmembrane passes span 98–118, 124–144, 151–171, 196–216, 217–237, and 249–269; these read LMAA…VLMF, IFQV…LAAF, AIFV…AVGV, VLLP…IGLS, WLAI…FFIW, and ILAI…VGFI.

The protein belongs to the binding-protein-dependent transport system permease family. CysTW subfamily. The complex is composed of two ATP-binding proteins (NrtC and NrtD), two transmembrane proteins (NrtB) and a solute-binding protein (NrtA).

It is found in the cell inner membrane. Its function is as follows. Part of the ABC transporter complex NrtABCD involved in nitrate uptake. The complex is probably also involved in nitrite transport. Probably responsible for the translocation of the substrate across the membrane. In Leptolyngbya laminosa (Phormidium laminosum), this protein is Nitrate import permease protein NrtB.